The following is a 72-amino-acid chain: Large ribosomal subunit protein bL31 (72 aa).

Residues Cys-16, Cys-18, Cys-38, and Cys-41 each contribute to the Zn(2+) site.

This sequence belongs to the bacterial ribosomal protein bL31 family. Type A subfamily. Part of the 50S ribosomal subunit. The cofactor is Zn(2+).

Binds the 23S rRNA. This is Large ribosomal subunit protein bL31 from Francisella tularensis subsp. holarctica (strain LVS).